A 2570-amino-acid chain; its full sequence is Stabilin-1 (2570 aa).

Positions 1 to 25 (MAGPRGLLPLCLLAFCLAGFSFVRG) are cleaved as a signal peptide. Residues 26 to 2478 (QVLFKGCDVK…LAPEAPPVAA (2453 aa)) lie on the Extracellular side of the membrane. EGF-like domains follow at residues 110 to 148 (HECP…SACQ), 156 to 193 (FGPD…PHCD), 195 to 229 (ELPV…QGSE), and 232 to 271 (APNP…MVCL). 11 disulfide bridges follow: C112–C126, C120–C136, C138–C147, C160–C171, C164–C181, C183–C192, C199–C210, C204–C217, C236–C247, C241–C257, and C259–C270. Residue N133 is glycosylated (N-linked (GlcNAc...) asparagine). Residues N286, N312, N413, N606, N673, N712, and N745 are each glycosylated (N-linked (GlcNAc...) asparagine). FAS1 domains follow at residues 356–494 (YGHL…TGLR) and 506–641 (KRTI…DGIL). An EGF-like 5 domain is found at 728–768 (DCTQCPGGFSNPCYGKGNCSDGIQGNGACLCFPDYKGIACH). 3 disulfide bridges follow: C732–C746, C740–C756, and C758–C767. N816 carries N-linked (GlcNAc...) asparagine glycosylation. EGF-like domains are found at residues 818-858 (SMGD…DGFS), 861-903 (PSNP…RVCV), 904-946 (AIDE…YQCS), and 947-986 (PIDP…DGFS). 10 cysteine pairs are disulfide-bonded: C822–C837, C831–C846, C865–C879, C873–C889, C891–C902, C908–C922, C916–C932, C934–C945, C951–C964, and C958–C974. FAS1 domains lie at 988 to 1118 (YGDI…SQVL) and 1128 to 1253 (GQGL…SGVL). 6 N-linked (GlcNAc...) asparagine glycosylation sites follow: N1087, N1096, N1170, N1178, N1222, and N1274. The Laminin EGF-like 1 domain maps to 1327–1392 (TLCEPCPGGL…CDCAHGLCQE (66 aa)). Disulfide bonds link C1332-C1346, C1340-C1356, and C1358-C1367. N1378 carries N-linked (GlcNAc...) asparagine glycosylation. 15 cysteine pairs are disulfide-bonded: C1379/C1390, C1383/C1400, C1402/C1411, C1420/C1430, C1424/C1440, C1442/C1453, C1459/C1472, C1466/C1482, C1484/C1495, C1501/C1514, C1508/C1524, C1526/C1538, C1544/C1557, C1551/C1567, and C1569/C1581. 4 EGF-like domains span residues 1416–1454 (TSPQ…IFCS), 1455–1496 (EVDP…ELCQ), 1497–1539 (EINS…RTCE), and 1540–1582 (LLDP…LTCR). N1471 carries N-linked (GlcNAc...) asparagine glycosylation. FAS1 domains are found at residues 1582 to 1708 (RARV…DRVL) and 1724 to 1864 (PRRN…DQLL). Residues N1626 and N1727 are each glycosylated (N-linked (GlcNAc...) asparagine). The 66-residue stretch at 1966–2031 (SECQACPGGP…RCTVHGRCDE (66 aa)) folds into the Laminin EGF-like 2 domain. Disulfide bonds link C1971/C1985, C1979/C1995, C1997/C2006, C2018/C2029, C2023/C2039, C2041/C2050, C2060/C2070, C2064/C2076, C2078/C2089, C2095/C2108, C2102/C2117, C2119/C2130, C2136/C2150, C2144/C2160, and C2162/C2173. 3 consecutive EGF-like domains span residues 2056–2090 (LQPV…RVCT), 2091–2131 (VADL…WSCR), and 2132–2174 (ARNP…LQCL). N2107 carries N-linked (GlcNAc...) asparagine glycosylation. Residues 2206–2301 (RAGVFHLQAT…SERWDAYCFR (96 aa)) enclose the Link domain. N-linked (GlcNAc...) asparagine glycans are attached at residues N2222, N2261, N2290, N2334, N2347, N2379, N2393, N2400, and N2424. 2 disulfide bridges follow: C2230/C2299 and C2254/C2275. An FAS1 7 domain is found at 2322–2459 (NGKLLDVLAA…GIIHALASPL (138 aa)). A helical membrane pass occupies residues 2479–2499 (GVGAVLAAGALLGLVAGALYL). Over 2500–2570 (RARGKPMGFG…PDTQRILTVK (71 aa)) the chain is Cytoplasmic.

Interacts with CHID1. High levels found in spleen, lymph node, liver and placenta. Also expressed in endothelial cells.

It localises to the membrane. In terms of biological role, acts as a scavenger receptor for acetylated low density lipoprotein. Binds to both Gram-positive and Gram-negative bacteria and may play a role in defense against bacterial infection. When inhibited in endothelial tube formation assays, there is a marked decrease in cell-cell interactions, suggesting a role in angiogenesis. Involved in the delivery of newly synthesized CHID1/SI-CLP from the biosynthetic compartment to the endosomal/lysosomal system. The chain is Stabilin-1 (STAB1) from Homo sapiens (Human).